We begin with the raw amino-acid sequence, 404 residues long: Nuclear receptor subfamily 2 group F member 6 (404 aa).

The span at 1 to 15 (MAMVTGGWGGPGGDT) shows a compositional bias: gly residues. Residues 1–49 (MAMVTGGWGGPGGDTNGVDKAGGYPRAAEDDSASPPGAASDAEPGDEER) form a disordered region. Residues 33–42 (ASPPGAASDA) show a composition bias toward low complexity. Phosphoserine occurs at positions 34 and 40. The segment at residues 53-128 (QVDCVVCGDK…VGMRKEAVQR (76 aa)) is a DNA-binding region (nuclear receptor). The segment at 56-76 (CVVCGDKSSGKHYGVFTCEGC) adopts an NR C4-type zinc-finger fold. Phosphoserine is present on S83. An NR C4-type zinc finger spans residues 92 to 116 (CRSNRDCQIDQHHRNQCQYCRLKKC). Residues 165-393 (PVSELIAQLL…TLIRDMLLSG (229 aa)) form the NR LBD domain. Residues 327 to 404 (LQEKAQVALT…TFNWPYGSGQ (78 aa)) form an important for dimerization region.

This sequence belongs to the nuclear hormone receptor family. NR2 subfamily. As to quaternary structure, binds DNA as dimer; homodimer and heterodimer with NR2F2 and probably NR2F1. Interacts with THRB. In terms of tissue distribution, expressed in heart, placenta, liver, skeletal muscle, kidney and pancreas.

The protein localises to the nucleus. Functionally, transcription factor predominantly involved in transcriptional repression. Binds to promoter/enhancer response elements that contain the imperfect 5'-AGGTCA-3' direct or inverted repeats with various spacings which are also recognized by other nuclear hormone receptors. Involved in modulation of hormonal responses. Represses transcriptional activity of the lutropin-choriogonadotropic hormone receptor/LHCGR gene, the renin/REN gene and the oxytocin-neurophysin/OXT gene. Represses the triiodothyronine-dependent and -independent transcriptional activity of the thyroid hormone receptor gene in a cell type-specific manner. The corepressing function towards thyroid hormone receptor beta/THRB involves at least in part the inhibition of THRB binding to triiodothyronine response elements (TREs) by NR2F6. Inhibits NFATC transcription factor DNA binding and subsequently its transcriptional activity. Acts as transcriptional repressor of IL-17 expression in Th-17 differentiated CD4(+) T cells and may be involved in induction and/or maintenance of peripheral immunological tolerance and autoimmunity. Involved in development of forebrain circadian clock; is required early in the development of the locus coeruleus (LC). In Homo sapiens (Human), this protein is Nuclear receptor subfamily 2 group F member 6 (NR2F6).